Consider the following 353-residue polypeptide: MRKRISAIIMTLFMVLVSCNSGGVAEDPKTVYLTSIANLGKGFLDVFVTFGDMVTGAFGIKADTKKSDIGKYFTDIESTMTSVKKKLQDEVAKNGNYPKVKTAVDEFVAILGKIEKGAKEASKGATGDVIIGNTVKNGDAVPGEATSVNSLVKGIKEIVGVVLKEGKADADATKDDSKKDIGKLFTATTDANRADNAAAQAAAASIGAVTGADILQAIVQSKENPVANSTDGIEKATDAAEIAVAPAKDNKKEIKDGAKKDAVIAAGIALRAMAKNGTFSIKNNEDAAVTTINSAAASAVNKILSTLIIAIRNTVDSGLKTINEALATVKQEDKSVEATNTAEATTSGQQAKN.

An N-terminal signal peptide occupies residues 1 to 18 (MRKRISAIIMTLFMVLVS). The N-palmitoyl cysteine moiety is linked to residue Cys-19. A lipid anchor (S-diacylglycerol cysteine) is attached at Cys-19. Residues 332–353 (EDKSVEATNTAEATTSGQQAKN) are disordered. Over residues 337-353 (EATNTAEATTSGQQAKN) the composition is skewed to polar residues.

This sequence belongs to the variable large protein (Vlp) family. Delta subfamily.

Its subcellular location is the cell outer membrane. Its function is as follows. The Vlp and Vsp proteins are antigenically distinct proteins, only one vlp or vsp gene is transcriptionally active at any one time. Switching between these genes is a mechanism of host immune response evasion. The chain is Variable large protein 17 from Borrelia hermsii.